An 872-amino-acid chain; its full sequence is Alanine--tRNA ligase (872 aa).

Positions 567, 571, 669, and 673 each coordinate Zn(2+).

This sequence belongs to the class-II aminoacyl-tRNA synthetase family. Zn(2+) is required as a cofactor.

It is found in the cytoplasm. The enzyme catalyses tRNA(Ala) + L-alanine + ATP = L-alanyl-tRNA(Ala) + AMP + diphosphate. Functionally, catalyzes the attachment of alanine to tRNA(Ala) in a two-step reaction: alanine is first activated by ATP to form Ala-AMP and then transferred to the acceptor end of tRNA(Ala). Also edits incorrectly charged Ser-tRNA(Ala) and Gly-tRNA(Ala) via its editing domain. The polypeptide is Alanine--tRNA ligase (Streptococcus pneumoniae (strain CGSP14)).